A 220-amino-acid chain; its full sequence is Nicotinamidase (220 aa).

Aspartate 11 is an active-site residue. The Zn(2+) site is built by aspartate 53, histidine 55, and histidine 94. The active site involves lysine 119. Cysteine 163 (nucleophile) is an active-site residue.

This sequence belongs to the isochorismatase family.

The protein resides in the cytoplasm. The protein localises to the nucleus. It is found in the peroxisome. It catalyses the reaction nicotinamide + H2O = nicotinate + NH4(+). It participates in cofactor biosynthesis; nicotinate biosynthesis; nicotinate from nicotinamide: step 1/1. Catalyzes the deamidation of nicotinamide, an early step in the NAD(+) salvage pathway. The protein is Nicotinamidase (pnc1) of Schizosaccharomyces pombe (strain 972 / ATCC 24843) (Fission yeast).